Here is a 549-residue protein sequence, read N- to C-terminus: Cation/acetate symporter ActP (549 aa).

The Periplasmic segment spans residues 1-32; the sequence is MKRVLTALAATLPFAANAADAISGAVERQPTN. The chain crosses the membrane as a helical span at residues 33-55; the sequence is WQAIIMFLIFVVFTLGITYWASK. Topologically, residues 56–75 are cytoplasmic; sequence RVRSRSDYYTAGGNITGFQN. A helical transmembrane segment spans residues 76-98; sequence GLAIAGDYMSAASFLGISALVFT. The Periplasmic portion of the chain corresponds to 99-102; the sequence is SGYD. Residues 103 to 125 traverse the membrane as a helical segment; that stretch reads GLIYSLGFLVGWPIILFLIAERL. Residues 126–145 are Cytoplasmic-facing; sequence RNLGRYTSADVASYRLKQGP. Residues 146-168 traverse the membrane as a helical segment; it reads IRILSACGSLVVVALYLIAQMVG. Topologically, residues 169–182 are periplasmic; sequence AGKLIELLFGLNYH. Residues 183-205 traverse the membrane as a helical segment; the sequence is IAVVLVGVLMMMYVLFGGMLATT. The Cytoplasmic segment spans residues 206-211; the sequence is WVQIIK. The chain crosses the membrane as a helical span at residues 212 to 234; that stretch reads AVLLLFGASFMAFMVMKHVGFSF. Over 235–260 the chain is Periplasmic; it reads NNLFSEAMAVHPKGVDIMKPGGLVKD. Residues 261-283 form a helical membrane-spanning segment; that stretch reads PISALSLGLGLMFGTAGLPHILM. Residues 284–302 are Cytoplasmic-facing; it reads RFFTVSDAREARKSVFYAT. Residues 303–325 form a helical membrane-spanning segment; sequence GFMGYFYILTFIIGFGAIMLVGA. Over 326–349 the chain is Periplasmic; it reads NPEYKDAAGHLIGGNNMAAVHLAN. The helical transmembrane segment at 350–372 threads the bilayer; it reads AVGGNLFLGFISAVAFATILAVV. The Cytoplasmic segment spans residues 373–401; that stretch reads ADLTLAGASAVSHDLYANVFKKGATEREE. A helical transmembrane segment spans residues 402-424; sequence LRVSKITVLILGVIAIILGVLFE. Residues 425 to 427 are Periplasmic-facing; the sequence is NQN. A helical membrane pass occupies residues 428–450; it reads IAFMVGLAFAIAASCNFPIILLS. Residues 451-461 are Cytoplasmic-facing; it reads MYWSKLTTRGA. A helical transmembrane segment spans residues 462–484; that stretch reads MLGGWLGLITAVVLMILGPTIWV. The Periplasmic segment spans residues 485–493; sequence QILGHEKAI. A helical transmembrane segment spans residues 494 to 516; it reads FPYEYPALFSISVAFLGIWFFSA. At 517-549 the chain is on the cytoplasmic side; it reads TDNSAEGARERELFRAQFIRSQTGFGVEQGRAH.

Belongs to the sodium:solute symporter (SSF) (TC 2.A.21) family.

The protein localises to the cell inner membrane. Transports acetate. In Shigella flexneri, this protein is Cation/acetate symporter ActP (actP).